A 142-amino-acid chain; its full sequence is Myosin-2 essential light chain (142 aa).

2 consecutive EF-hand domains span residues 2–37 (DDLA…LGQN) and 75–110 (HTVE…LGER).

In terms of assembly, myosin is a hexamer of 2 heavy chains and 4 light chains (two regulatory light chains and two essential light chains).

The protein resides in the cytoplasm. It is found in the cytoskeleton. Its function is as follows. Required for cytokinesis and embryo elongation. May regulate myosin II complex formation and/or the association of myosin with actin. May be involved in the organization of mlc-4 and nmy-2 into bundles. This chain is Myosin-2 essential light chain, found in Caenorhabditis elegans.